Here is a 117-residue protein sequence, read N- to C-terminus: Movement protein TGB2 (117 aa).

The Cytoplasmic segment spans residues 1–11 (MPLIPPPNPQK). Residues 12–32 (TYQIAVLALGLVLLLAFVLIS) traverse the membrane as a helical segment. The Lumenal portion of the chain corresponds to 33–78 (DHSPKVGDHLHNLPFGGEYKDGTKTIKYFQRPNQHSLSKTLAKSHN). Residues 79–99 (TTIFLIILGLIGTLHGLHYFS) traverse the membrane as a helical segment. At 100-117 (NNRRISSSLHCVLCQNKH) the chain is on the cytoplasmic side.

This sequence belongs to the Tymovirales TGBp2 protein family.

The protein localises to the host endoplasmic reticulum membrane. In terms of biological role, plays a role in viral cell-to-cell propagation, by facilitating genome transport to neighboring plant cells through plasmosdesmata,. This chain is Movement protein TGB2, found in Trifolium (WCMV).